The chain runs to 118 residues: MARIAGINIPDHKHTVIALTAIYGIGKTRAQAICAATGIAEDVKISELSEEQIDKLRDEVGKFTVEGDLRREVTLNIKRLLDLGCYRGLRHRRGLPVRGQRTKTNARTRKGPRKPIKK.

Positions 94-118 are disordered; it reads GLPVRGQRTKTNARTRKGPRKPIKK.

It belongs to the universal ribosomal protein uS13 family. In terms of assembly, part of the 30S ribosomal subunit. Forms a loose heterodimer with protein S19. Forms two bridges to the 50S subunit in the 70S ribosome.

In terms of biological role, located at the top of the head of the 30S subunit, it contacts several helices of the 16S rRNA. In the 70S ribosome it contacts the 23S rRNA (bridge B1a) and protein L5 of the 50S subunit (bridge B1b), connecting the 2 subunits; these bridges are implicated in subunit movement. Contacts the tRNAs in the A and P-sites. The polypeptide is Small ribosomal subunit protein uS13 (Pasteurella multocida (strain Pm70)).